The sequence spans 442 residues: Probable glycine dehydrogenase (decarboxylating) subunit 1 (442 aa).

The protein belongs to the GcvP family. N-terminal subunit subfamily. In terms of assembly, the glycine cleavage system is composed of four proteins: P, T, L and H. In this organism, the P 'protein' is a heterodimer of two subunits.

The catalysed reaction is N(6)-[(R)-lipoyl]-L-lysyl-[glycine-cleavage complex H protein] + glycine + H(+) = N(6)-[(R)-S(8)-aminomethyldihydrolipoyl]-L-lysyl-[glycine-cleavage complex H protein] + CO2. In terms of biological role, the glycine cleavage system catalyzes the degradation of glycine. The P protein binds the alpha-amino group of glycine through its pyridoxal phosphate cofactor; CO(2) is released and the remaining methylamine moiety is then transferred to the lipoamide cofactor of the H protein. In Geotalea uraniireducens (strain Rf4) (Geobacter uraniireducens), this protein is Probable glycine dehydrogenase (decarboxylating) subunit 1.